The sequence spans 181 residues: Deoxyuridine 5'-triphosphate nucleotidohydrolase (181 aa).

Substrate is bound by residues arginine 96–glycine 98, asparagine 109, threonine 113–aspartate 115, and lysine 123.

It belongs to the dUTPase family. It depends on Mg(2+) as a cofactor.

It catalyses the reaction dUTP + H2O = dUMP + diphosphate + H(+). Its pathway is pyrimidine metabolism; dUMP biosynthesis; dUMP from dCTP (dUTP route): step 2/2. Functionally, this enzyme is involved in nucleotide metabolism: it produces dUMP, the immediate precursor of thymidine nucleotides and it decreases the intracellular concentration of dUTP so that uracil cannot be incorporated into DNA. The chain is Deoxyuridine 5'-triphosphate nucleotidohydrolase from Corynebacterium efficiens (strain DSM 44549 / YS-314 / AJ 12310 / JCM 11189 / NBRC 100395).